A 356-amino-acid chain; its full sequence is UDP-N-acetylglucosamine--N-acetylmuramyl-(pentapeptide) pyrophosphoryl-undecaprenol N-acetylglucosamine transferase (356 aa).

UDP-N-acetyl-alpha-D-glucosamine is bound by residues 13-15 (TGG), Asn125, Arg161, Ser189, Ile243, and Gln288.

Belongs to the glycosyltransferase 28 family. MurG subfamily.

It localises to the cell inner membrane. The enzyme catalyses di-trans,octa-cis-undecaprenyl diphospho-N-acetyl-alpha-D-muramoyl-L-alanyl-D-glutamyl-meso-2,6-diaminopimeloyl-D-alanyl-D-alanine + UDP-N-acetyl-alpha-D-glucosamine = di-trans,octa-cis-undecaprenyl diphospho-[N-acetyl-alpha-D-glucosaminyl-(1-&gt;4)]-N-acetyl-alpha-D-muramoyl-L-alanyl-D-glutamyl-meso-2,6-diaminopimeloyl-D-alanyl-D-alanine + UDP + H(+). It participates in cell wall biogenesis; peptidoglycan biosynthesis. Its function is as follows. Cell wall formation. Catalyzes the transfer of a GlcNAc subunit on undecaprenyl-pyrophosphoryl-MurNAc-pentapeptide (lipid intermediate I) to form undecaprenyl-pyrophosphoryl-MurNAc-(pentapeptide)GlcNAc (lipid intermediate II). This chain is UDP-N-acetylglucosamine--N-acetylmuramyl-(pentapeptide) pyrophosphoryl-undecaprenol N-acetylglucosamine transferase, found in Cupriavidus metallidurans (strain ATCC 43123 / DSM 2839 / NBRC 102507 / CH34) (Ralstonia metallidurans).